A 193-amino-acid chain; its full sequence is Capsid protein (193 aa).

Post-translationally, the N-terminus is blocked.

It localises to the virion. The protein is Capsid protein of Crataegus (hawthorn).